The following is a 1849-amino-acid chain: SH3 and multiple ankyrin repeat domains protein 2 (1849 aa).

Positions 1 to 33 are disordered; the sequence is MPRSPTSSEDEMAQSFSDYSVGSESDSSKEETI. The segment covering 15 to 25 has biased composition (low complexity); the sequence is SFSDYSVGSES. ANK repeat units follow at residues 196–226, 230–259, 263–293, 297–326, 330–359, and 363–393; these read TGET…HLDF, DGMT…SPDY, YGLT…TVCC, NGWH…DMSA, SGNT…NKEL, and NSQT…DIVP. The segment at 451 to 493 is disordered; the sequence is QQMPSKPEGAAKTIGSYVPGPRSRSPSLNRLGGAGEDGKRPQP. The SH3 domain maps to 526–585; it reads VPGRLFVAVKPYQPQVDGEIPLHRGDRVKVLSIGEGGFWEGSARGHIGWFPAECVEEVQC. One can recognise a PDZ domain in the interval 626–720; the sequence is TVVLQKKDNE…HLVLKVVTVT (95 aa). Basic and acidic residues predominate over residues 764–774; the sequence is SVRKKKDKPEE. Residues 764-808 are disordered; that stretch reads SVRKKKDKPEEIVPASKPSRAAENMAVEPRVATIKQRPSSRCFPA. Ser-831 is modified (phosphoserine). The residue at position 860 (Thr-860) is a Phosphothreonine. The tract at residues 878-910 is disordered; sequence LSMPDTSEDIPPPPQSVPPSPPPPSPTTYNCPK. The span at 887-903 shows a compositional bias: pro residues; that stretch reads IPPPPQSVPPSPPPPSP. Position 960 is a phosphoserine (Ser-960). 4 disordered regions span residues 1013 to 1293, 1328 to 1371, 1432 to 1526, and 1574 to 1594; these read LVKQ…RKGD, LQEE…TTVP, PALS…GGEN, and SFVI…PGMA. The segment covering 1040 to 1052 has biased composition (low complexity); the sequence is STSSSGKSSQGSS. Residues 1086–1097 show a composition bias toward basic and acidic residues; sequence VRDREKRLEARR. The residue at position 1099 (Ser-1099) is a Phosphoserine. Over residues 1128–1138 the composition is skewed to acidic residues; the sequence is EEGDFADEDSA. 3 stretches are compositionally biased toward low complexity: residues 1159 to 1170, 1181 to 1199, and 1208 to 1221; these read GGAEASAPGEAG, GPES…AGPG, and RLLD…LALS. Over residues 1274–1293 the composition is skewed to basic and acidic residues; the sequence is RRQETENKYETDLGRDRKGD. Thr-1278 bears the Phosphothreonine mark. The SH3-binding signature appears at 1327–1333; it reads ALQEEDE. Over residues 1343–1357 the composition is skewed to low complexity; it reads SSPSEVPEGVSETEG. Residues 1445–1460 show a composition bias toward polar residues; that stretch reads TPQSPSLNSSQPTNSA. Basic and acidic residues predominate over residues 1494 to 1505; sequence VDSRSSSDHHLE. Low complexity predominate over residues 1506-1522; the sequence is TTSTISTVSSISTLSSE. Positions 1577-1588 are enriched in pro residues; the sequence is IPPPAPPPPPGS. Thr-1667 carries O-linked (GlcNAc) threonine glycosylation. Residues 1678 to 1692 are compositionally biased toward polar residues; it reads FTVRPGTSQPITLQS. The segment at 1678 to 1776 is disordered; sequence FTVRPGTSQP…SILQQPISNK (99 aa). Phosphoserine is present on residues Ser-1709 and Ser-1713. Low complexity-rich tracts occupy residues 1721–1738 and 1760–1774; these read TLPA…PALS and RSRS…QPIS. Residues 1786 to 1849 form the SAM domain; that stretch reads WTKPDVADWL…ERALKQLLDR (64 aa).

Belongs to the SHANK family. In terms of assembly, is part of a complex with DLG4/PSD-95 and DLGAP1/GKAP. Interacts with CTTN/cortactin SH3 domain, DLGAP1/GKAP and alpha-latrotoxin receptor 1. Interacts with DNM2, DBNL, GRID2, BAIAP2, SLC9A3, PLCB3 and CFTR. Interacts (via proline-rich region) with PDE4D. Interacts with ABI1 (via SH3 domain). In terms of tissue distribution, isoform 3 is present in epithelial colonic cells (at protein level).

The protein resides in the apical cell membrane. The protein localises to the cytoplasm. It is found in the synapse. It localises to the postsynaptic density. Its subcellular location is the cell projection. The protein resides in the growth cone. The protein localises to the dendritic spine. Its function is as follows. Seems to be an adapter protein in the postsynaptic density (PSD) of excitatory synapses that interconnects receptors of the postsynaptic membrane including NMDA-type and metabotropic glutamate receptors, and the actin-based cytoskeleton. May play a role in the structural and functional organization of the dendritic spine and synaptic junction. In Homo sapiens (Human), this protein is SH3 and multiple ankyrin repeat domains protein 2 (SHANK2).